Consider the following 718-residue polypeptide: MNPAEAKAVPISKEMEGPHPHSKKRHRRQDAKTEPEKSQSTKPPVDHEKKAQEGKPKEHTKPKSTHKHASDGEGKHGRNEKTASRSKEPVTPAKRTEPETKPQDTKPAGGKSVAAGTTAAPGKAGDPKKEKKSLPAAALAEPKPDEPSGKSGMDAALDDLIDTLGEPSETQEDSTAYTGPEISDPMSSTYIEELGKREVTIPPKYRELLEKKTGVAGPPPDSVTPLGPDDAIDALSSDFTCSSPVASGKEAGKEAAKSAGEVLEAESAKVMRAAAPPQEKKRKVEEDAMSDQALEALSASLGTRMAEPELDLSSIKEVAEAKRKEEKVEKCGEDDETVPAEYRLKPATDKDGKPLLPEPAEKPKPRSESELIDELSKDFSQAKSNEKQPKPTGKTEESKAAVPAPVAEAVPRTSMCSIQPVPPKPASLQKSTVPDDAVEALAGSLGRKEADPEEGKPVADKIKEKSKEEEREKLGEKEETIPPDYRLEEAKDKDGKPLLPSEPTAQLPALSEDLLLDALSEDFSGPSSASSLKFDDAMLSAAVSEVVSQSPASITRATAPPPDTRPSNKELDDALDKLSDSLGQRQPDPDENKPMEDKVKERAKKEHKDKLGERDDTIPPEYRHLLDQGEQDKPEKPPTKKSKEIKKPAGDQDPIDALSGDLDSCPPAAETSQATEKDKSKTTTASSSKAAKHGDKAKDSAQTTEETSKPKANEKNAS.

Disordered stretches follow at residues 1–189 (MNPA…MSST) and 210–238 (EKKT…LSSD). The span at 20 to 29 (PHSKKRHRRQ) shows a compositional bias: basic residues. Basic and acidic residues-rich tracts occupy residues 30-61 (DAKT…EHTK) and 68-104 (HASD…KPQD). K32 participates in a covalent cross-link: Glycyl lysine isopeptide (Lys-Gly) (interchain with G-Cter in SUMO2). Position 49 is an N6-acetyllysine (K49). At S86 the chain carries Phosphoserine. Positions 114–124 (AAGTTAAPGKA) are enriched in low complexity. Phosphoserine occurs at positions 133, 222, and 243. The stretch at 170-222 (TQEDSTAYTGPEISDPMSSTYIEELGKREVTIPPKYRELLEKKTGVAGPPPDS) is one Inhibitory domain 1 repeat. Disordered regions lie at residues 266 to 291 (ESAK…AMSD) and 320 to 509 (EAKR…QLPA). S290 bears the Blocked amino end (Ser); in form erythrocyte mark. Residues 307–359 (EPELDLSSIKEVAEAKRKEEKVEKCGEDDETVPAEYRLKPATDKDGKPLLPEP) form an Inhibitory domain 2 repeat. Basic and acidic residues-rich tracts occupy residues 320–331 (EAKRKEEKVEKC), 342–377 (YRLK…ELSK), and 384–399 (SNEK…EESK). 3 positions are modified to phosphoserine: S367, S369, and S376. A compositionally biased stretch (low complexity) spans 400-411 (AAVPAPVAEAVP). Position 444 is a phosphoserine (S444). Residues 446–496 (GRKEADPEEGKPVADKIKEKSKEEEREKLGEKEETIPPDYRLEEAKDKDGK) show a composition bias toward basic and acidic residues. Residues 450–503 (ADPEEGKPVADKIKEKSKEEEREKLGEKEETIPPDYRLEEAKDKDGKPLLPSEP) form an Inhibitory domain 3 repeat. Phosphoserine occurs at positions 520, 531, 579, and 581. The tract at residues 543-718 (VSEVVSQSPA…KPKANEKNAS (176 aa)) is disordered. A compositionally biased stretch (basic and acidic residues) spans 566-579 (PSNKELDDALDKLS). The stretch at 587–640 (PDPDENKPMEDKVKERAKKEHKDKLGERDDTIPPEYRHLLDQGEQDKPEKPPTK) is one Inhibitory domain 4 repeat. 2 stretches are compositionally biased toward basic and acidic residues: residues 587–650 (PDPD…KPAG) and 706–718 (ETSK…KNAS).

It belongs to the protease inhibitor I27 (calpastatin) family.

Functionally, specific inhibition of calpain (calcium-dependent cysteine protease). Plays a key role in postmortem tenderization of meat and have been proposed to be involved in muscle protein degradation in living tissue. In Oryctolagus cuniculus (Rabbit), this protein is Calpastatin (CAST).